Consider the following 282-residue polypeptide: ATP phosphoribosyltransferase (282 aa).

Belongs to the ATP phosphoribosyltransferase family. Long subfamily. Requires Mg(2+) as cofactor.

It is found in the cytoplasm. The enzyme catalyses 1-(5-phospho-beta-D-ribosyl)-ATP + diphosphate = 5-phospho-alpha-D-ribose 1-diphosphate + ATP. It participates in amino-acid biosynthesis; L-histidine biosynthesis; L-histidine from 5-phospho-alpha-D-ribose 1-diphosphate: step 1/9. With respect to regulation, feedback inhibited by histidine. Its function is as follows. Catalyzes the condensation of ATP and 5-phosphoribose 1-diphosphate to form N'-(5'-phosphoribosyl)-ATP (PR-ATP). Has a crucial role in the pathway because the rate of histidine biosynthesis seems to be controlled primarily by regulation of HisG enzymatic activity. The chain is ATP phosphoribosyltransferase from Pyrobaculum aerophilum (strain ATCC 51768 / DSM 7523 / JCM 9630 / CIP 104966 / NBRC 100827 / IM2).